Reading from the N-terminus, the 908-residue chain is Protein translocase subunit SecA (908 aa).

Residues Gln87, 105–109 (GEGKT), and Asp512 each bind ATP. A disordered region spans residues 865 to 908 (GGDDGSDEMMAHTPMIRDGDKVGRNDPCPCGSGRKYKQCHGKLS). Over residues 879 to 888 (MIRDGDKVGR) the composition is skewed to basic and acidic residues. Positions 892, 894, 903, and 904 each coordinate Zn(2+). The span at 898 to 908 (RKYKQCHGKLS) shows a compositional bias: basic residues.

The protein belongs to the SecA family. As to quaternary structure, monomer and homodimer. Part of the essential Sec protein translocation apparatus which comprises SecA, SecYEG and auxiliary proteins SecDF-YajC and YidC. Zn(2+) is required as a cofactor.

The protein resides in the cell inner membrane. It localises to the cytoplasm. The enzyme catalyses ATP + H2O + cellular proteinSide 1 = ADP + phosphate + cellular proteinSide 2.. Its function is as follows. Part of the Sec protein translocase complex. Interacts with the SecYEG preprotein conducting channel. Has a central role in coupling the hydrolysis of ATP to the transfer of proteins into and across the cell membrane, serving both as a receptor for the preprotein-SecB complex and as an ATP-driven molecular motor driving the stepwise translocation of polypeptide chains across the membrane. The polypeptide is Protein translocase subunit SecA (Shewanella sp. (strain MR-4)).